The chain runs to 774 residues: Phosphoribosylformylglycinamidine synthase subunit PurL (774 aa).

His51 is an active-site residue. ATP-binding residues include Tyr54 and Lys93. Mg(2+) is bound at residue Glu95. Substrate-binding positions include 96–99 (SHNH) and Arg118. His97 acts as the Proton acceptor in catalysis. Position 119 (Asp119) interacts with Mg(2+). Residue Gln242 participates in substrate binding. Asp270 contacts Mg(2+). A substrate-binding site is contributed by 314–316 (ESQ). ATP contacts are provided by Asp514 and Gly551. A Mg(2+)-binding site is contributed by Asn552. Ser554 contacts substrate.

It belongs to the FGAMS family. In terms of assembly, monomer. Part of the FGAM synthase complex composed of 1 PurL, 1 PurQ and 2 PurS subunits.

The protein resides in the cytoplasm. It carries out the reaction N(2)-formyl-N(1)-(5-phospho-beta-D-ribosyl)glycinamide + L-glutamine + ATP + H2O = 2-formamido-N(1)-(5-O-phospho-beta-D-ribosyl)acetamidine + L-glutamate + ADP + phosphate + H(+). The protein operates within purine metabolism; IMP biosynthesis via de novo pathway; 5-amino-1-(5-phospho-D-ribosyl)imidazole from N(2)-formyl-N(1)-(5-phospho-D-ribosyl)glycinamide: step 1/2. Part of the phosphoribosylformylglycinamidine synthase complex involved in the purines biosynthetic pathway. Catalyzes the ATP-dependent conversion of formylglycinamide ribonucleotide (FGAR) and glutamine to yield formylglycinamidine ribonucleotide (FGAM) and glutamate. The FGAM synthase complex is composed of three subunits. PurQ produces an ammonia molecule by converting glutamine to glutamate. PurL transfers the ammonia molecule to FGAR to form FGAM in an ATP-dependent manner. PurS interacts with PurQ and PurL and is thought to assist in the transfer of the ammonia molecule from PurQ to PurL. The protein is Phosphoribosylformylglycinamidine synthase subunit PurL of Gloeobacter violaceus (strain ATCC 29082 / PCC 7421).